Consider the following 296-residue polypeptide: Protoheme IX farnesyltransferase (296 aa).

Residues 1–9 are Cytoplasmic-facing; the sequence is MMFKQYLQV. The helical transmembrane segment at 10–28 threads the bilayer; sequence TKPGIIFGNLISVIGGFLL. Over 29-37 the chain is Periplasmic; that stretch reads ASKGSIDYP. A helical membrane pass occupies residues 38–56; that stretch reads LFIYTLVGVSLVVASGCVF. The Cytoplasmic segment spans residues 57-78; it reads NNYIDRDIDRKMERTKNRVLVK. Residues 79–97 form a helical membrane-spanning segment; sequence GLISPAVSLVYATLLGIAG. The Periplasmic segment spans residues 98 to 107; it reads FMLLWFGANP. A helical membrane pass occupies residues 108 to 126; sequence LACWLGVMGFVVYVGVYSL. The Cytoplasmic portion of the chain corresponds to 127–197; sequence YMKRHSVYGT…YQAANIPVLP (71 aa). Residues 198 to 216 traverse the membrane as a helical segment; the sequence is VVKGISVAKNHITLYIIAF. The Periplasmic segment spans residues 217–228; that stretch reads AVATLMLSLGGY. Residues 229-247 traverse the membrane as a helical segment; sequence AGYKYLVVAAAVSVWWLGM. Topologically, residues 248–268 are cytoplasmic; it reads ALRGYKVADDRIWARKLFGFS. Residues 269-287 form a helical membrane-spanning segment; sequence IIAITALSVMMSVDFMVPD. Residues 288–296 lie on the Periplasmic side of the membrane; the sequence is SHTLLAAVW.

This sequence belongs to the UbiA prenyltransferase family. Protoheme IX farnesyltransferase subfamily.

Its subcellular location is the cell inner membrane. The enzyme catalyses heme b + (2E,6E)-farnesyl diphosphate + H2O = Fe(II)-heme o + diphosphate. It functions in the pathway porphyrin-containing compound metabolism; heme O biosynthesis; heme O from protoheme: step 1/1. Its function is as follows. Converts heme B (protoheme IX) to heme O by substitution of the vinyl group on carbon 2 of heme B porphyrin ring with a hydroxyethyl farnesyl side group. The polypeptide is Protoheme IX farnesyltransferase (Escherichia coli O139:H28 (strain E24377A / ETEC)).